Reading from the N-terminus, the 226-residue chain is Ribonuclease T (226 aa).

The Exonuclease domain occupies 20-194 (VVIDVETAGF…YDTERTAELF (175 aa)). Mg(2+) is bound by residues D23, E25, H181, and D186. H181 (proton donor/acceptor) is an active-site residue.

This sequence belongs to the RNase T family. As to quaternary structure, homodimer. Mg(2+) serves as cofactor.

Functionally, trims short 3' overhangs of a variety of RNA species, leaving a one or two nucleotide 3' overhang. Responsible for the end-turnover of tRNA: specifically removes the terminal AMP residue from uncharged tRNA (tRNA-C-C-A). Also appears to be involved in tRNA biosynthesis. The chain is Ribonuclease T from Shewanella denitrificans (strain OS217 / ATCC BAA-1090 / DSM 15013).